A 259-amino-acid polypeptide reads, in one-letter code: Transcription factor bHLH125 (259 aa).

One can recognise a bHLH domain in the interval 73–125 (SKKMKHRDIERQRRQEVSSLFKRLRTLLPFQYIQGKRSTSDHIVQAVNYIKDL).

As to quaternary structure, homodimer.

The protein localises to the nucleus. This Arabidopsis thaliana (Mouse-ear cress) protein is Transcription factor bHLH125 (BHLH125).